The following is a 92-amino-acid chain: Co-chaperonin GroES (92 aa).

Belongs to the GroES chaperonin family. Heptamer of 7 subunits arranged in a ring. Interacts with the chaperonin GroEL.

It localises to the cytoplasm. In terms of biological role, together with the chaperonin GroEL, plays an essential role in assisting protein folding. The GroEL-GroES system forms a nano-cage that allows encapsulation of the non-native substrate proteins and provides a physical environment optimized to promote and accelerate protein folding. GroES binds to the apical surface of the GroEL ring, thereby capping the opening of the GroEL channel. This is Co-chaperonin GroES from Methanosarcina mazei (strain ATCC BAA-159 / DSM 3647 / Goe1 / Go1 / JCM 11833 / OCM 88) (Methanosarcina frisia).